We begin with the raw amino-acid sequence, 104 residues long: Ig lambda-2 chain C region (104 aa).

The Ig-like domain occupies P6–S99. A disulfide bond links C27 and C85.

The polypeptide is Ig lambda-2 chain C region (Rattus norvegicus (Rat)).